Consider the following 66-residue polypeptide: U-scoloptoxin(04)-Ssd2a (66 aa).

Residues 1-19 (MKAIYILSVLLLMMLPILS) form the signal peptide.

The protein belongs to the scoloptoxin-04 family. Contains 2 disulfide bonds. Expressed by the venom gland.

The protein resides in the secreted. This is U-scoloptoxin(04)-Ssd2a from Scolopendra dehaani (Thai centipede).